Reading from the N-terminus, the 423-residue chain is Alpha-1-antichymotrypsin (423 aa).

Positions 1–23 (MERMLPLLALGLLAAGFCPAVLC) are cleaved as a signal peptide. N-linked (GlcNAc...) asparagine glycans are attached at residues asparagine 33, asparagine 93, asparagine 106, asparagine 127, and asparagine 186. The DNA-binding element occupies 235–237 (KKK). N-linked (GlcNAc...) asparagine glycosylation is present at asparagine 271. The RCL stretch occupies residues 369–394 (GTEASAATAVKITLLSALVETRTIVR). An O-glycosylated at one site region spans residues 381–389 (TLLSALVET).

Belongs to the serpin family. Interacts with DNAJC1. In terms of processing, N- and O-glycosylated. As to expression, plasma. Synthesized in the liver. Like the related alpha-1-antitrypsin, its concentration increases in the acute phase of inflammation or infection. Found in the amyloid plaques from the hippocampus of Alzheimer disease brains.

The protein resides in the secreted. In terms of biological role, although its physiological function is unclear, it can inhibit neutrophil cathepsin G and mast cell chymase, both of which can convert angiotensin-1 to the active angiotensin-2. This chain is Alpha-1-antichymotrypsin (SERPINA3), found in Homo sapiens (Human).